The chain runs to 343 residues: Dimethyladenosine transferase 1, mitochondrial (343 aa).

The transit peptide at 1-27 (MAASGKLSTWRLPPLPTIREIIKLLRV) directs the protein to the mitochondrion. Leu-38, Gly-63, Glu-85, Lys-86, Asp-111, Val-112, and Asn-141 together coordinate S-adenosyl-L-methionine.

Belongs to the class I-like SAM-binding methyltransferase superfamily. rRNA adenine N(6)-methyltransferase family. KsgA subfamily. As to quaternary structure, interacts with mitochondrial RNA polymerase POLRMT. Interacts with TFAM. Bound to the maturing mtSSU until the late stages of assembly.

It is found in the mitochondrion. The catalysed reaction is adenosine(N)/adenosine(N+1) in rRNA + 4 S-adenosyl-L-methionine = N(6)-dimethyladenosine(N)/N(6)-dimethyladenosine(N+1) in rRNA + 4 S-adenosyl-L-homocysteine + 4 H(+). Functionally, S-adenosyl-L-methionine-dependent methyltransferase which specifically dimethylates mitochondrial 12S rRNA at the conserved stem loop. Also required for basal transcription of mitochondrial DNA, probably via its interaction with POLRMT and TFAM. Stimulates transcription independently of the methyltransferase activity. Its function is as follows. Mitochondrial methyltransferase which uses S-adenosyl methionine to dimethylate two highly conserved adjacent adenosine residues (A1583 and A1584) within the loop of helix 45 at the 3-prime end of 12S rRNA, thereby regulating the assembly or stability of the small subunit of the mitochondrial ribosome. Also required for basal transcription of mitochondrial DNA, probably via its interaction with POLRMT and TFAM. Stimulates transcription independently of the methyltransferase activity. This Pongo abelii (Sumatran orangutan) protein is Dimethyladenosine transferase 1, mitochondrial (TFB1M).